Here is a 349-residue protein sequence, read N- to C-terminus: Short-wave-sensitive opsin 1 (349 aa).

Over methionine 1–alanine 34 the chain is Extracellular. Asparagine 15 carries N-linked (GlcNAc...) asparagine glycosylation. Residues phenylalanine 35–alanine 59 form a helical membrane-spanning segment. Residues threonine 60–asparagine 71 lie on the Cytoplasmic side of the membrane. Residues tyrosine 72–cysteine 97 traverse the membrane as a helical segment. The Extracellular segment spans residues tyrosine 98–glutamate 111. A disulfide bond links cysteine 108 and cysteine 185. Residues alanine 112–phenylalanine 131 traverse the membrane as a helical segment. Over glutamate 132–histidine 150 the chain is Cytoplasmic. A helical transmembrane segment spans residues alanine 151 to serine 174. Residues arginine 175 to tyrosine 200 lie on the Extracellular side of the membrane. The chain crosses the membrane as a helical span at residues tyrosine 201–leucine 228. Topologically, residues arginine 229–histidine 250 are cytoplasmic. The helical transmembrane segment at methionine 251–valine 274 threads the bilayer. Over asparagine 275–aspartate 282 the chain is Extracellular. A helical transmembrane segment spans residues leucine 283–methionine 307. N6-(retinylidene)lysine is present on lysine 294. Topologically, residues asparagine 308–asparagine 349 are cytoplasmic. The segment at glutamate 327–asparagine 349 is disordered. Over residues leucine 330 to asparagine 349 the composition is skewed to polar residues.

The protein belongs to the G-protein coupled receptor 1 family. Opsin subfamily. In terms of processing, phosphorylated on some or all of the serine and threonine residues present in the C-terminal region.

The protein localises to the cell membrane. It is found in the photoreceptor inner segment. Its subcellular location is the cell projection. It localises to the cilium. The protein resides in the photoreceptor outer segment. The protein localises to the cytoplasm. It is found in the perinuclear region. In terms of biological role, visual pigments are the light-absorbing molecules that mediate vision. They consist of an apoprotein, opsin, covalently linked to cis-retinal. Required for the maintenance of cone outer segment organization in the ventral retina, but not essential for the maintenance of functioning cone photoreceptors. Involved in ensuring correct abundance and localization of retinal membrane proteins. May increase spectral sensitivity in dim light. The sequence is that of Short-wave-sensitive opsin 1 (OPN1SW) from Bos taurus (Bovine).